A 280-amino-acid polypeptide reads, in one-letter code: Protease HtpX (280 aa).

Transmembrane regions (helical) follow at residues 7 to 26 (TFIL…GLLG) and 30 to 49 (GMLV…YWYS). Zn(2+) is bound at residue histidine 129. Glutamate 130 is a catalytic residue. Histidine 133 contacts Zn(2+). The next 2 helical transmembrane spans lie at 146 to 166 (ATIA…SMFG) and 178 to 198 (VVGM…QMAI). Glutamate 203 contributes to the Zn(2+) binding site.

Belongs to the peptidase M48B family. Requires Zn(2+) as cofactor.

The protein localises to the cell inner membrane. The protein is Protease HtpX of Legionella pneumophila (strain Corby).